We begin with the raw amino-acid sequence, 349 residues long: Methylthioribose-1-phosphate isomerase (349 aa).

Residues 49–51 (RGA), Arg92, and Gln199 each bind substrate. Asp240 (proton donor) is an active-site residue. 250–251 (NK) lines the substrate pocket.

This sequence belongs to the eIF-2B alpha/beta/delta subunits family. MtnA subfamily.

It catalyses the reaction 5-(methylsulfanyl)-alpha-D-ribose 1-phosphate = 5-(methylsulfanyl)-D-ribulose 1-phosphate. The protein operates within amino-acid biosynthesis; L-methionine biosynthesis via salvage pathway; L-methionine from S-methyl-5-thio-alpha-D-ribose 1-phosphate: step 1/6. In terms of biological role, catalyzes the interconversion of methylthioribose-1-phosphate (MTR-1-P) into methylthioribulose-1-phosphate (MTRu-1-P). The chain is Methylthioribose-1-phosphate isomerase from Syntrophobacter fumaroxidans (strain DSM 10017 / MPOB).